Consider the following 273-residue polypeptide: Transposable element Tcb2 transposase (273 aa).

It belongs to the transposase 5 family.

The protein resides in the nucleus. Its function is as follows. Probably essential for transposable element Tcb2 transposition. The sequence is that of Transposable element Tcb2 transposase from Caenorhabditis briggsae.